A 206-amino-acid polypeptide reads, in one-letter code: Small ribosomal subunit protein uS4 (206 aa).

An S4 RNA-binding domain is found at 96-156; sequence GRLDNVVYRM…EKAKKQSRVK (61 aa).

Belongs to the universal ribosomal protein uS4 family. As to quaternary structure, part of the 30S ribosomal subunit. Contacts protein S5. The interaction surface between S4 and S5 is involved in control of translational fidelity.

Functionally, one of the primary rRNA binding proteins, it binds directly to 16S rRNA where it nucleates assembly of the body of the 30S subunit. In terms of biological role, with S5 and S12 plays an important role in translational accuracy. This Klebsiella pneumoniae (strain 342) protein is Small ribosomal subunit protein uS4.